The primary structure comprises 134 residues: Large ribosomal subunit protein eL14 (134 aa).

This sequence belongs to the eukaryotic ribosomal protein eL14 family. Component of the large ribosomal subunit (LSU). Mature yeast ribosomes consist of a small (40S) and a large (60S) subunit. The 40S small subunit contains 1 molecule of ribosomal RNA (18S rRNA) and at least 33 different proteins. The large 60S subunit contains 3 rRNA molecules (25S, 5.8S and 5S rRNA) and at least 46 different proteins.

The protein resides in the cytoplasm. It is found in the nucleus. Its function is as follows. Component of the ribosome, a large ribonucleoprotein complex responsible for the synthesis of proteins in the cell. The small ribosomal subunit (SSU) binds messenger RNAs (mRNAs) and translates the encoded message by selecting cognate aminoacyl-transfer RNA (tRNA) molecules. The large subunit (LSU) contains the ribosomal catalytic site termed the peptidyl transferase center (PTC), which catalyzes the formation of peptide bonds, thereby polymerizing the amino acids delivered by tRNAs into a polypeptide chain. The nascent polypeptides leave the ribosome through a tunnel in the LSU and interact with protein factors that function in enzymatic processing, targeting, and the membrane insertion of nascent chains at the exit of the ribosomal tunnel. The chain is Large ribosomal subunit protein eL14 (rpl14) from Schizosaccharomyces pombe (strain 972 / ATCC 24843) (Fission yeast).